A 1020-amino-acid polypeptide reads, in one-letter code: FERM domain-containing protein 4A (1020 aa).

Positions Arg-5–Lys-307 constitute an FERM domain. The tract at residues Lys-343–Thr-405 is necessary for interaction with CYTH1. Residues Ser-351–Ser-367 are compositionally biased toward low complexity. Residues Ser-351 to Asp-371 are disordered. Positions Ser-367–Glu-401 form a coiled coil. The residue at position 515 (Ser-515) is a Phosphoserine. Residues Asp-538 to Arg-665 are disordered. Over residues Gln-542–Gln-551 the composition is skewed to polar residues. The span at Gly-556–Gln-572 shows a compositional bias: pro residues. A necessary for tight junction and adherens junction localization; Requires for interaction with PARD3 region spans residues His-565 to His-920. Phosphoserine occurs at positions 590 and 601. Basic residues predominate over residues Val-609 to Phe-624. A compositionally biased stretch (polar residues) spans Ser-626–Ser-658. 2 positions are modified to phosphoserine: Ser-666 and Ser-696. 2 disordered regions span residues Glu-698–Ser-741 and Ala-757–Pro-810. The segment covering Arg-773–Ala-796 has biased composition (low complexity). Ser-785, Ser-854, and Ser-882 each carry phosphoserine. Disordered regions lie at residues Lys-862–Val-949 and Cys-961–Glu-1020. Over residues Asp-893–Arg-910 the composition is skewed to basic and acidic residues. Positions Ser-927–Thr-947 are enriched in low complexity. 3 stretches are compositionally biased toward polar residues: residues Ala-967 to Ile-981, Thr-994 to Ser-1004, and Glu-1011 to Glu-1020.

Interacts (via coiled-coil domain) with CYTH1 (via coiled-coil domain). Interacts with PARD3 (via coiled-coil domain). Found in a complex with PARD3, CYTH1 and FRMD4A. Interacts with CYTH2. Interacts with CYTH3.

Its subcellular location is the cytoplasm. It localises to the cytoskeleton. The protein resides in the cell junction. It is found in the adherens junction. The protein localises to the tight junction. Its function is as follows. Scaffolding protein that regulates epithelial cell polarity by connecting ARF6 activation with the PAR3 complex. Plays a redundant role with FRMD4B in epithelial polarization. May regulate MAPT secretion by activating ARF6-signaling. The chain is FERM domain-containing protein 4A (Frmd4a) from Mus musculus (Mouse).